The primary structure comprises 255 residues: Probable UDP-N-acetylglucosamine pyrophosphorylase (255 aa).

It catalyses the reaction N-acetyl-alpha-D-glucosamine 1-phosphate + UTP + H(+) = UDP-N-acetyl-alpha-D-glucosamine + diphosphate. The protein operates within nucleotide-sugar biosynthesis; UDP-N-acetyl-alpha-D-glucosamine biosynthesis; UDP-N-acetyl-alpha-D-glucosamine from N-acetyl-alpha-D-glucosamine 1-phosphate: step 1/1. In Acanthamoeba polyphaga (Amoeba), this protein is Probable UDP-N-acetylglucosamine pyrophosphorylase.